The primary structure comprises 348 residues: Aspartate carbamoyltransferase catalytic subunit (348 aa).

Residues Arg-59 and Thr-60 each coordinate carbamoyl phosphate. Lys-87 is a binding site for L-aspartate. Carbamoyl phosphate is bound by residues Arg-109, His-142, and Gln-145. 2 residues coordinate L-aspartate: Arg-182 and Arg-253. The carbamoyl phosphate site is built by Gly-294 and Pro-295.

Belongs to the aspartate/ornithine carbamoyltransferase superfamily. ATCase family. In terms of assembly, heterododecamer (2C3:3R2) of six catalytic PyrB chains organized as two trimers (C3), and six regulatory PyrI chains organized as three dimers (R2).

The catalysed reaction is carbamoyl phosphate + L-aspartate = N-carbamoyl-L-aspartate + phosphate + H(+). It functions in the pathway pyrimidine metabolism; UMP biosynthesis via de novo pathway; (S)-dihydroorotate from bicarbonate: step 2/3. In terms of biological role, catalyzes the condensation of carbamoyl phosphate and aspartate to form carbamoyl aspartate and inorganic phosphate, the committed step in the de novo pyrimidine nucleotide biosynthesis pathway. This Prochlorococcus marinus (strain MIT 9313) protein is Aspartate carbamoyltransferase catalytic subunit.